We begin with the raw amino-acid sequence, 139 residues long: MKKTALLNAQLSHCIATLGHTESLTICDAGLPIPLSVERIDLALTAGVPSFLQTLNVVTNEMYVERVVIAEEIKEKNPEILTALLTQLQQLESHQGNQIQVEFESHETFKKFTLESKAIVRTGECSPYANVILYSGVPF.

The active-site Proton donor is H20. Substrate-binding positions include D28, H106, and 128–130 (YAN).

The protein belongs to the RbsD / FucU family. RbsD subfamily. In terms of assembly, homodecamer.

The protein resides in the cytoplasm. The catalysed reaction is beta-D-ribopyranose = beta-D-ribofuranose. It participates in carbohydrate metabolism; D-ribose degradation; D-ribose 5-phosphate from beta-D-ribopyranose: step 1/2. Functionally, catalyzes the interconversion of beta-pyran and beta-furan forms of D-ribose. This Haemophilus influenzae (strain PittGG) protein is D-ribose pyranase.